Here is a 324-residue protein sequence, read N- to C-terminus: D-alanine--D-alanine ligase (324 aa).

In terms of domain architecture, ATP-grasp spans 120–322 (NNYLRGFGVE…LKEILTEIIE (203 aa)). 149–204 (IDKLGLPLIVKPNDGGSSFGVTKVTNITQIQLAIRNAFNEGEGVLIESFIPGTEIT) is a binding site for ATP. Mg(2+)-binding residues include aspartate 276, glutamate 289, and asparagine 291.

It belongs to the D-alanine--D-alanine ligase family. It depends on Mg(2+) as a cofactor. Mn(2+) serves as cofactor.

It localises to the cytoplasm. It carries out the reaction 2 D-alanine + ATP = D-alanyl-D-alanine + ADP + phosphate + H(+). Its pathway is cell wall biogenesis; peptidoglycan biosynthesis. Its function is as follows. Cell wall formation. The sequence is that of D-alanine--D-alanine ligase from Azobacteroides pseudotrichonymphae genomovar. CFP2.